A 351-amino-acid chain; its full sequence is Outer membrane protein A (351 aa).

A signal peptide spans 1-21 (MKKTAIAIAVALAGFATVAQA). Transmembrane regions (beta stranded) follow at residues 27–37 (TWYTGAKLGWS), 55–66 (QLGAGAFGGYQV), 70–78 (VGFEMGYDW), 96–107 (QGVQLTAKLGYP), 112–120 (LDIYTRLGG), 147–156 (PVFAGGVEWA), 161–168 (IATRLEYQ), and 187–195 (LLSLGVSYR). 4 repeat units span residues 206–207 (AP), 208–209 (AP), 210–211 (AP), and 212–213 (AP). Residues 206 to 213 (APAPAPAP) form a 4 X 2 AA tandem repeats of A-P region. The OmpA-like domain maps to 215–343 (VQTKHFTLKS…RVEIEVKGIK (129 aa)). An intrachain disulfide couples Cys-316 to Cys-328.

It belongs to the outer membrane OOP (TC 1.B.6) superfamily. OmpA family. Monomer and homodimer.

The protein localises to the cell outer membrane. Functionally, with TolR probably plays a role in maintaining the position of the peptidoglycan cell wall in the periplasm. Acts as a porin with low permeability that allows slow penetration of small solutes; an internal gate slows down solute passage. Its function is as follows. Required for conjugation with F-type plasmids; probably serves as the mating receptor on recipient cells. In Escherichia fergusonii (strain ATCC 35469 / DSM 13698 / CCUG 18766 / IAM 14443 / JCM 21226 / LMG 7866 / NBRC 102419 / NCTC 12128 / CDC 0568-73), this protein is Outer membrane protein A.